The chain runs to 402 residues: E3 ubiquitin-protein ligase MARCHF11 (402 aa).

The span at 1–11 (MSFEGGHGGSR) shows a compositional bias: gly residues. Residues 1-161 (MSFEGGHGGS…SGGGDQRAGH (161 aa)) form a disordered region. Over residues 21–56 (EPPPQPPPPPPPTPPPGEPAPVPAAPRYLPPLPASP) the composition is skewed to pro residues. Residues 111–124 (EAAAAKGGPGESEA) show a composition bias toward low complexity. The segment at 162-222 (QHQHHQPICK…ELCCYRYHVI (61 aa)) adopts an RING-CH-type zinc-finger fold. Residues Cys-170, Cys-173, Cys-186, Cys-188, His-196, Cys-199, Cys-212, and Cys-215 each coordinate Zn(2+). A run of 2 helical transmembrane segments spans residues 245 to 265 (MIAV…LLWS) and 278 to 298 (ILFQ…IGLI). Positions 371-374 (YVLL) match the YXXL motif motif. The short motif at 399-402 (VTSV) is the PDZ-binding element.

Interacts (YXXL motif) with AP1M1. Interacts (via PDZ-binding motif) with LIN7A. Interacts with unidentified fucose glycoproteins.

It localises to the cytoplasmic vesicle membrane. The enzyme catalyses S-ubiquitinyl-[E2 ubiquitin-conjugating enzyme]-L-cysteine + [acceptor protein]-L-lysine = [E2 ubiquitin-conjugating enzyme]-L-cysteine + N(6)-ubiquitinyl-[acceptor protein]-L-lysine.. The protein operates within protein modification; protein ubiquitination. Its function is as follows. E3 ubiquitin-protein ligase that mediates polyubiquitination of CD4. E3 ubiquitin ligases accept ubiquitin from an E2 ubiquitin-conjugating enzyme in the form of a thioester and then directly transfer the ubiquitin to targeted substrates. May play a role in ubuquitin-dependent protein sorting in developmenting spermatids. In Homo sapiens (Human), this protein is E3 ubiquitin-protein ligase MARCHF11.